Consider the following 365-residue polypeptide: Glucose 1-dehydrogenase 1 (365 aa).

Zn(2+) is bound at residue D38. T40 serves as a coordination point for substrate. The Zn(2+) site is built by H63 and E64. Substrate is bound by residues E115 and E151. Zn(2+) is bound at residue E151. NADP(+) is bound by residues 182–185 (NGSL), 207–208 (RR), 272–274 (LGV), and 301–303 (SVN). N303 serves as a coordination point for substrate.

It belongs to the zinc-containing alcohol dehydrogenase family. Glucose 1-dehydrogenase subfamily. The cofactor is Zn(2+).

The enzyme catalyses D-glucose + NAD(+) = D-glucono-1,5-lactone + NADH + H(+). It catalyses the reaction D-glucose + NADP(+) = D-glucono-1,5-lactone + NADPH + H(+). Its function is as follows. Catalyzes the NAD(P)(+)-dependent oxidation of D-glucose to D-gluconate via gluconolactone. Can utilize both NAD(+) and NADP(+) as electron acceptor. Is involved in the degradation of glucose through a modified Entner-Doudoroff pathway. The sequence is that of Glucose 1-dehydrogenase 1 from Haloterrigena turkmenica (strain ATCC 51198 / DSM 5511 / JCM 9101 / NCIMB 13204 / VKM B-1734 / 4k) (Halococcus turkmenicus).